Consider the following 503-residue polypeptide: Medium/long-chain-fatty-acid--CoA ligase FadD17 (503 aa).

Belongs to the ATP-dependent AMP-binding enzyme family.

It catalyses the reaction a medium-chain fatty acid + ATP + CoA = a medium-chain fatty acyl-CoA + AMP + diphosphate. The catalysed reaction is a long-chain fatty acid + ATP + CoA = a long-chain fatty acyl-CoA + AMP + diphosphate. It participates in lipid metabolism; fatty acid biosynthesis. Catalyzes the activation of medium/long-chain fatty acids as acyl-coenzyme A (acyl-CoA), which are then transferred to the multifunctional polyketide synthase (PKS) type III for further chain extension. This Mycobacterium marinum (strain ATCC BAA-535 / M) protein is Medium/long-chain-fatty-acid--CoA ligase FadD17 (fadD17).